A 390-amino-acid polypeptide reads, in one-letter code: Succinyl-diaminopimelate desuccinylase (390 aa).

A Zn(2+)-binding site is contributed by His-74. Residue Asp-76 is part of the active site. Asp-107 contributes to the Zn(2+) binding site. Glu-140 functions as the Proton acceptor in the catalytic mechanism. Residues Glu-141, Glu-169, and His-363 each coordinate Zn(2+).

This sequence belongs to the peptidase M20A family. DapE subfamily. As to quaternary structure, homodimer. Zn(2+) serves as cofactor. Requires Co(2+) as cofactor.

It catalyses the reaction N-succinyl-(2S,6S)-2,6-diaminopimelate + H2O = (2S,6S)-2,6-diaminopimelate + succinate. The protein operates within amino-acid biosynthesis; L-lysine biosynthesis via DAP pathway; LL-2,6-diaminopimelate from (S)-tetrahydrodipicolinate (succinylase route): step 3/3. Catalyzes the hydrolysis of N-succinyl-L,L-diaminopimelic acid (SDAP), forming succinate and LL-2,6-diaminopimelate (DAP), an intermediate involved in the bacterial biosynthesis of lysine and meso-diaminopimelic acid, an essential component of bacterial cell walls. The chain is Succinyl-diaminopimelate desuccinylase from Bartonella henselae (strain ATCC 49882 / DSM 28221 / CCUG 30454 / Houston 1) (Rochalimaea henselae).